The sequence spans 928 residues: Receptor-like kinase TMK4 (928 aa).

A signal peptide spans 1 to 24 (MEAPTPLLLLVLLTTITFFTTSVA). The Extracellular segment spans residues 25–472 (DDQTAMLALA…GGSSGGGGSK (448 aa)). C51 and C58 are joined by a disulfide. 10 LRR repeats span residues 61–84 (GRVT…ISTL), 85–107 (SELK…FAKL), 108–130 (SSLQ…AFAG), 132–157 (TSLQ…LVDS), 158–180 (TSLT…IFDS), 181–205 (LASL…LGKS), 207–229 (IQNL…LSSM), 230–251 (TSLS…DLSK), 252–276 (SENL…LLTL), and 278–298 (SLKN…LFSP). An N-linked (GlcNAc...) asparagine glycan is attached at N144. N-linked (GlcNAc...) asparagine glycosylation occurs at N193. N281 is a glycosylation site (N-linked (GlcNAc...) asparagine). 2 disulfides stabilise this stretch: C310–C318 and C348–C356. LRR repeat units follow at residues 360–383 (GKNV…AIAN), 384–407 (LTSL…ELTF), and 408–435 (MTSL…VKFS). A glycan (N-linked (GlcNAc...) asparagine) is linked at N383. Residues 445–465 (TNGGDGSSPGTGGASGGPGGS) are disordered. A helical transmembrane segment spans residues 473–493 (VGVIVGVIVAVLVFLAILGFV). The Cytoplasmic segment spans residues 494-928 (VYKFVMKRKY…PNTFDSADGR (435 aa)). Residues 578-858 (FSEDNILGRG…HAVNVLGPLV (281 aa)) enclose the Protein kinase domain. Residues 584-592 (LGRGGFGVV) and K606 contribute to the ATP site. D707 functions as the Proton acceptor in the catalytic mechanism. 2 stretches are compositionally biased toward polar residues: residues 898–911 (FHGD…QSSI) and 918–928 (FPNTFDSADGR). A disordered region spans residues 898-928 (FHGDFSYSQTQSSIPPKASGFPNTFDSADGR).

Belongs to the protein kinase superfamily. Ser/Thr protein kinase family. As to quaternary structure, interacts with BAK1 (via kinase domain), SERK4 and SERK5. Expressed in roots, leaves, stems, siliques and flowers. Ubiquitous, with a high expression in mature pollen grains and in the pericycle and the xylem vasculature of the primary and lateral roots.

The protein resides in the membrane. It catalyses the reaction L-seryl-[protein] + ATP = O-phospho-L-seryl-[protein] + ADP + H(+). It carries out the reaction L-threonyl-[protein] + ATP = O-phospho-L-threonyl-[protein] + ADP + H(+). In terms of biological role, involved in auxin signal transduction and cell expansion and proliferation regulation. May be involved in brassinosteroid-mediated plant growth and development via auxin regulation. May be involved in microspore and pollen development. This Arabidopsis thaliana (Mouse-ear cress) protein is Receptor-like kinase TMK4.